Here is a 76-residue protein sequence, read N- to C-terminus: Sec-independent protein translocase protein TatA (76 aa).

The chain crosses the membrane as a helical span at residues 1 to 21 (MGSFSIWHWLIVLVIVMLIFG). The disordered stretch occupies residues 47 to 76 (NADKPAEEAQPTQQVGGHTIDVEVKEKTKS). Residues 66-76 (IDVEVKEKTKS) show a composition bias toward basic and acidic residues.

The protein belongs to the TatA/E family. In terms of assembly, the Tat system comprises two distinct complexes: a TatABC complex, containing multiple copies of TatA, TatB and TatC subunits, and a separate TatA complex, containing only TatA subunits. Substrates initially bind to the TatABC complex, which probably triggers association of the separate TatA complex to form the active translocon.

Its subcellular location is the cell inner membrane. Part of the twin-arginine translocation (Tat) system that transports large folded proteins containing a characteristic twin-arginine motif in their signal peptide across membranes. TatA could form the protein-conducting channel of the Tat system. This is Sec-independent protein translocase protein TatA from Dechloromonas aromatica (strain RCB).